A 120-amino-acid polypeptide reads, in one-letter code: Small ribosomal subunit protein uS17m (120 aa).

The transit peptide at 1 to 20 (MSIVRSSVHAKWVVGKVIGT) directs the protein to the mitochondrion.

This sequence belongs to the universal ribosomal protein uS17 family. In terms of assembly, component of the mitochondrial ribosome small subunit (28S) which comprises a 12S rRNA and about 30 distinct proteins.

The protein resides in the mitochondrion. This is Small ribosomal subunit protein uS17m (Mrps17) from Mus musculus (Mouse).